The chain runs to 452 residues: GTPase Der (452 aa).

2 EngA-type G domains span residues 4–169 (PVVA…PPAA) and 177–352 (IKVA…ESHR). GTP is bound by residues 10-17 (GRPNVGKS), 57-61 (DTGGL), 120-123 (NKCE), 183-190 (GRPNVGKS), 230-234 (DTAGI), and 295-298 (NKWD). The region spanning 353–438 (RRVSTSVIND…PIRLIWRGKP (86 aa)) is the KH-like domain.

Belongs to the TRAFAC class TrmE-Era-EngA-EngB-Septin-like GTPase superfamily. EngA (Der) GTPase family. As to quaternary structure, associates with the 50S ribosomal subunit.

Its function is as follows. GTPase that plays an essential role in the late steps of ribosome biogenesis. This Microcystis aeruginosa (strain NIES-843 / IAM M-2473) protein is GTPase Der.